The following is a 129-amino-acid chain: Histone H2A.J (129 aa).

The tract at residues 1–22 is disordered; it reads MSGRGKQGGKVRAKAKSRSSRA. 2 positions are modified to N6-acetyllysine: K6 and K10. Residues 7-19 are compositionally biased toward basic residues; sequence QGGKVRAKAKSRS. Residue K10 is modified to N6-lactoyllysine; alternate. An N5-methylglutamine modification is found at Q105. T121 carries the post-translational modification Phosphothreonine; by DCAF1.

Belongs to the histone H2A family. As to quaternary structure, the nucleosome is a histone octamer containing two molecules each of H2A, H2B, H3 and H4 assembled in one H3-H4 heterotetramer and two H2A-H2B heterodimers. The octamer wraps approximately 147 bp of DNA. In terms of processing, glutamine methylation at Gln-105 (H2AQ104me) by FBL is specifically dedicated to polymerase I. It is present at 35S ribosomal DNA locus and impairs binding of the FACT complex. Post-translationally, monoubiquitination of Lys-120 (H2AXK119ub) gives a specific tag for epigenetic transcriptional repression. Following DNA double-strand breaks (DSBs), it is ubiquitinated through 'Lys-63' linkage of ubiquitin moieties. Phosphorylation on Ser-2 (H2AS1ph) is enhanced during mitosis. Phosphorylation on Ser-2 by RPS6KA5/MSK1 directly represses transcription. Acetylation of H3 inhibits Ser-2 phosphorylation by RPS6KA5/MSK1. Phosphorylation at Thr-121 (H2AT120ph) by DCAF1 is present in the regulatory region of many tumor suppresor genes and down-regulates their transcription.

The protein localises to the nucleus. Its subcellular location is the chromosome. In terms of biological role, core component of nucleosome. Nucleosomes wrap and compact DNA into chromatin, limiting DNA accessibility to the cellular machineries which require DNA as a template. Histones thereby play a central role in transcription regulation, DNA repair, DNA replication and chromosomal stability. DNA accessibility is regulated via a complex set of post-translational modifications of histones, also called histone code, and nucleosome remodeling. This is Histone H2A.J from Bos taurus (Bovine).